Consider the following 198-residue polypeptide: Carnitine operon protein CaiE (198 aa).

Residues 179 to 198 (VEENRPRLKGTTDVKPKSAQ) form a disordered region. Over residues 180 to 198 (EENRPRLKGTTDVKPKSAQ) the composition is skewed to basic and acidic residues.

Belongs to the transferase hexapeptide repeat family.

It functions in the pathway amine and polyamine metabolism; carnitine metabolism. Its function is as follows. Overproduction of CaiE stimulates the activity of CaiB and CaiD. In Salmonella enteritidis PT4 (strain P125109), this protein is Carnitine operon protein CaiE.